Consider the following 129-residue polypeptide: Follitropin subunit beta (129 aa).

The N-terminal stretch at 1–20 is a signal peptide; that stretch reads MKSVQFCFLFCCWRAICCRS. 6 cysteine pairs are disulfide-bonded: cysteine 21–cysteine 69, cysteine 35–cysteine 84, cysteine 38–cysteine 122, cysteine 46–cysteine 100, cysteine 50–cysteine 102, and cysteine 105–cysteine 112. Residues asparagine 25 and asparagine 42 are each glycosylated (N-linked (GlcNAc...) asparagine).

The protein belongs to the glycoprotein hormones subunit beta family. In terms of assembly, heterodimer. The active follitropin is a heterodimer composed of an alpha chain/CGA shared with other hormones and a unique beta chain/FSHB shown here.

It localises to the secreted. Together with the alpha chain CGA constitutes follitropin, the follicle-stimulating hormone, and provides its biological specificity to the hormone heterodimer. Binds FSHR, a G protein-coupled receptor, on target cells to activate downstream signaling pathways. Follitropin is involved in follicle development and spermatogenesis in reproductive organs. The chain is Follitropin subunit beta (FSHB) from Bos taurus (Bovine).